The chain runs to 637 residues: Threonine--tRNA ligase (637 aa).

Residues 1-61 (MIKVTLKDGK…DKDCNLEILT (61 aa)) form the TGS domain. The interval 242–532 (DHRKIGKELD…LIEHYAGAFP (291 aa)) is catalytic. Zn(2+)-binding residues include cysteine 333, histidine 384, and histidine 509.

Belongs to the class-II aminoacyl-tRNA synthetase family. Homodimer. Zn(2+) serves as cofactor.

It is found in the cytoplasm. The enzyme catalyses tRNA(Thr) + L-threonine + ATP = L-threonyl-tRNA(Thr) + AMP + diphosphate + H(+). In terms of biological role, catalyzes the attachment of threonine to tRNA(Thr) in a two-step reaction: L-threonine is first activated by ATP to form Thr-AMP and then transferred to the acceptor end of tRNA(Thr). Also edits incorrectly charged L-seryl-tRNA(Thr). The polypeptide is Threonine--tRNA ligase (Clostridium acetobutylicum (strain ATCC 824 / DSM 792 / JCM 1419 / IAM 19013 / LMG 5710 / NBRC 13948 / NRRL B-527 / VKM B-1787 / 2291 / W)).